The primary structure comprises 236 residues: Transmembrane protein 70 homolog, mitochondrial (236 aa).

The N-terminal 64 residues, 1–64 (MLGLRAMLPK…WLSVKSTKTE (64 aa)), are a transit peptide targeting the mitochondrion. Transmembrane regions (helical) follow at residues 83–103 (MVKF…PILL) and 116–136 (VFLC…LHFI).

This sequence belongs to the TMEM70 family. Associates with mitochondrial complex I assembly intermediates during its biogenesis.

The protein localises to the mitochondrion membrane. In terms of biological role, scaffold protein that participates in the c-ring assembly of mitochondrial ATP synthase (F(1)F(0) ATP synthase or complex V). Also binds the mitochondrial proton-transporting ATP synthase complex I and may play a role in the stability of its membrane-bound subassemblies. The sequence is that of Transmembrane protein 70 homolog, mitochondrial from Drosophila melanogaster (Fruit fly).